A 227-amino-acid chain; its full sequence is Iron-regulated surface determinant protein C (227 aa).

Positions 1 to 28 are cleaved as a signal peptide; it reads MKNILKVFNTMILALIIIIATFSNTANA. The NEAT domain maps to 29 to 150; it reads ADSGTLNYEV…KFNGPSDVAG (122 aa). Residues Ser-47, Ile-48, Tyr-132, and Tyr-136 each contribute to the heme site. Residues 149-191 are disordered; that stretch reads AGANAPGKDDKNSASGSDKGSDGATTGQSESNSSNKDKVENPQ. The segment covering 161-172 has biased composition (low complexity); that stretch reads SASGSDKGSDGA. The span at 173–182 shows a compositional bias: polar residues; the sequence is TTGQSESNSS. Positions 189–193 match the NPQTN sorting signal motif; sequence NPQTN. Thr-192 carries the post-translational modification Pentaglycyl murein peptidoglycan amidated threonine. Positions 193 to 227 are cleaved as a propeptide — removed by sortase B; the sequence is NAGTPAYIYAIPVASLALLIAITLFVRKKSKGNVE.

This sequence belongs to the IsdC family. In terms of assembly, monomer. Interacts with IsdA.

It is found in the secreted. The protein localises to the cell wall. In terms of biological role, involved in heme (porphyrin) scavenging. Binds hemoglobin and almost exclusively free-base protoporphyrin IX. Probably has a role as the central conduit of the isd heme uptake system, i.e. mediates the transfer of the iron-containing nutrient from IsdABH to the membrane translocation system IsdDEF. Hemin-free IsdC (apo-IsdC) acquires hemin from hemin-containing IsdA (holo-IsdA) probably through the activated holo-IsdA-apo-IsdC complex and due to the higher affinity of apo-IsdC for the cofactor. The reaction is reversible. This is Iron-regulated surface determinant protein C (isdC) from Staphylococcus aureus (strain MRSA252).